The primary structure comprises 1528 residues: MSVAIRKRSWEEHVTHWMGQPFNSDDRNTACHHGLVADSLQASMEKDATLNVDRKEKCVSLPDCCHGSELRDFPGRPMGHLSKDVDENDSHEGEDQFLSLEASTETLVHVSDEDNNADLCLTDDKQVLNTQGQKTSGQHMIQGAGSLEKALPIIQSNQVSSNSWGIAGETELALVKESGERKVTDSISKSLELCNEISLSEIKDAPKVNAVDTLNVKDIAPEKQLLNSAVIAQQRRKPDPPKDENERSTCNVVQNEFLDTPCTNRGLPLLKTDFGSCLLQPPSCPNGMSAENGLEKSGFSQHQNKSPPKVKAEDGMQCLQLKETLATQEPTDNQVRLRKRKEIREDRDRARLDSMVLLIMKLDQLDQDIENALSTSSSPSGTPTNLRRHVPDLESGSESGADTISVNQTRVNLSSDTESTDLPSSTPVANSGTKPKTTAIQGISEKEKAEIEAKEACDWLRATGFPQYAQLYEDFLFPIDISLVKREHDFLDRDAIEALCRRLNTLNKCAVMKLEISPHRKRSDDSDEDEPCAISGKWTFQRDSKRWSRLEEFDVFSPKQDLVPGSPDDSHPKDGPSPGGTLMDLSERQEVSSVRSLSSTGSLPSHAPPSEDAATPRTNSVISVCSSSNLAGNDDSFGSLPSPKELSSFSFSMKGHEKTAKSKTRSLLKRMESLKLKSSHHSKHKAPSKLGLIISGPILQEGMDEEKLKQLNCVEISALNGNRINVPMVRKRSVSNSTQTSSSSSQSETSSAVSTPSPVTRTRSLSACNKRVGMYLEGFDPFNQSTFNNVVEQNFKNRESYPEDTVFYIPEDHKPGTFPKALTNGSFSPSGNNGSVNWRTGSFHGPGHISLRRENSSDSPKELKRRNSSSSMSSRLSIYDNVPGSILYSSSGDLADLENEDIFPELDDILYHVKGMQRIVNQWSEKFSDEGDSDSALDSVSPCPSSPKQIHLDVDNDRTTPSDLDSTGNSLNEPEEPSEIPERRDSGVGASLTRSNRHRLRWHSFQSSHRPSLNSVSLQINCQSVAQMNLLQKYSLLKLTALLEKYTPSNKHGFSWAVPKFMKRIKVPDYKDRSVFGVPLTVNVQRTGQPLPQSIQQAMRYLRNHCLDQVGLFRKSGVKSRIQALRQMNEGAIDCVNYEGQSAYDVADMLKQYFRDLPEPLMTNKLSETFLQIYQYVPKDQRLQAIKAAIMLLPDENREVLQTLLYFLSDVTAAVKENQMTPTNLAVCLAPSLFHLNTLKRENSSPRVMQRKQSLGKPDQKDLNENLAATQGLAHMIAECKKLFQVPEEMSRCRNSYTEQELKPLTLEALGHLGNDDSADYQHFLQDCVDGLFKEVKEKFKGWVSYSTSEQAELSYKKVSEGPPLRLWRSVIEVPAVPEEILKRLLKEQHLWDVDLLDSKVIEILDSQTEIYQYVQNSMAPHPARDYVVLRTWRTNLPKGACALLLTSVDHDRAPVVGVRVNVLLSRYLIEPCGPGKSKLTYMCRVDLRGHMPEWYTKSFGHLCAAEVVKIRDSFSNQNTETKDTKSR.

3 disordered regions span residues 72–94 (DFPG…HEGE), 288–310 (MSAE…PPKV), and 372–436 (ALST…TKPK). The span at 81–94 (LSKDVDENDSHEGE) shows a compositional bias: basic and acidic residues. Residues 374-384 (STSSSPSGTPT) are compositionally biased toward low complexity. The span at 396-436 (GSESGADTISVNQTRVNLSSDTESTDLPSSTPVANSGTKPK) shows a compositional bias: polar residues. Residues 448–515 (KAEIEAKEAC…LNKCAVMKLE (68 aa)) enclose the SAM domain. Phosphoserine is present on residues serine 523, serine 526, and serine 566. Disordered regions lie at residues 558–617 (PKQD…ATPR), 732–764 (RSVS…RTRS), 829–876 (PSGN…SSRL), and 928–990 (SDEG…GVGA). Composition is skewed to low complexity over residues 591–605 (VSSV…SLPS) and 734–760 (VSNS…SPVT). The interval 710–884 (QLNCVEISAL…RLSIYDNVPG (175 aa)) is focal adhesion-targeting (FAT). Serine 757 carries the phosphoserine modification. Over residues 851 to 862 (LRRENSSDSPKE) the composition is skewed to basic and acidic residues. Residues 936-948 (ALDSVSPCPSSPK) are compositionally biased toward polar residues. Over residues 950 to 960 (IHLDVDNDRTT) the composition is skewed to basic and acidic residues. The span at 961-972 (PSDLDSTGNSLN) shows a compositional bias: polar residues. Residues 1051–1073 (KHGFSWAVPKFMKRIKVPDYKDR) form a polybasic cluster (PBR) region. Residues 1078–1284 (VPLTVNVQRT…HMIAECKKLF (207 aa)) form the Rho-GAP domain. In terms of domain architecture, START spans 1314–1521 (GNDDSADYQH…RDSFSNQNTE (208 aa)).

In terms of assembly, interacts with EF1A1, facilitates EF1A1 distribution to the membrane periphery and ruffles upon growth factor stimulation and suppresses cell migration. Interacts with tensin TNS1 (via N-terminus); the interaction is decreased by phosphorylation of TNS1. Interacts with TNS3 and PTEN; in resting cells, interacts with TNS3 (via C2 tensin-type domain) but, following growth factor stimulation, TNS3 and PTEN are phosphorylated which leads to weakened interaction with TNS3 and enhanced interaction with PTEN. Interacts (via C-terminus) with tensin TNS4 (via SH2 domain); the interaction is independent of tyrosine phosphorylation of DLC1. As to expression, highest level of expression in the spleen, with rather lower levels in prostate, testis, ovary, small intestine and colon, but none in the thymus.

It is found in the cytoplasm. The protein localises to the cell junction. The protein resides in the focal adhesion. Its subcellular location is the membrane. Functionally, functions as a GTPase-activating protein for the small GTPases RHOA, RHOB, RHOC and CDC42, terminating their downstream signaling. This induces morphological changes and detachment through cytoskeletal reorganization, playing a critical role in biological processes such as cell migration and proliferation. Also functions in vivo as an activator of the phospholipase PLCD1. Active DLC1 increases cell migration velocity but reduces directionality. Required for growth factor-induced epithelial cell migration; in resting cells, interacts with TNS3 while PTEN interacts with the p85 regulatory subunit of the PI3K kinase complex but growth factor stimulation induces phosphorylation of TNS3 and PTEN, causing them to change their binding preference so that PTEN interacts with DLC1 and TNS3 interacts with p85. The PTEN-DLC1 complex translocates to the posterior of migrating cells to activate RHOA while the TNS3-p85 complex translocates to the leading edge of migrating cells to promote RAC1 activation. This chain is Rho GTPase-activating protein 7 (DLC1), found in Homo sapiens (Human).